A 286-amino-acid chain; its full sequence is Foldase protein PrsA 1 (286 aa).

A signal peptide spans 1-18 (MKKAMLALAATSVIALSA). Cys-19 carries the N-palmitoyl cysteine lipid modification. The S-diacylglycerol cysteine moiety is linked to residue Cys-19. Residues 130–220 (KPEIKASHIL…FGYHIIKVTD (91 aa)) enclose the PpiC domain.

It belongs to the PrsA family.

The protein resides in the cell membrane. The enzyme catalyses [protein]-peptidylproline (omega=180) = [protein]-peptidylproline (omega=0). Functionally, plays a major role in protein secretion by helping the post-translocational extracellular folding of several secreted proteins. The protein is Foldase protein PrsA 1 (prsA1) of Bacillus cereus (strain ATCC 14579 / DSM 31 / CCUG 7414 / JCM 2152 / NBRC 15305 / NCIMB 9373 / NCTC 2599 / NRRL B-3711).